The primary structure comprises 213 residues: N-(5'-phosphoribosyl)anthranilate isomerase (213 aa).

It belongs to the TrpF family.

It catalyses the reaction N-(5-phospho-beta-D-ribosyl)anthranilate = 1-(2-carboxyphenylamino)-1-deoxy-D-ribulose 5-phosphate. It functions in the pathway amino-acid biosynthesis; L-tryptophan biosynthesis; L-tryptophan from chorismate: step 3/5. The chain is N-(5'-phosphoribosyl)anthranilate isomerase from Roseiflexus sp. (strain RS-1).